Consider the following 208-residue polypeptide: Proteasome subunit beta 2 (208 aa).

Residues 1–9 (MSGKKIVSK) constitute a propeptide, removed in mature form; by autocatalysis. The active-site Nucleophile is the Thr10.

It belongs to the peptidase T1B family. As to quaternary structure, the 20S proteasome core is composed of 14 alpha and 14 beta subunits that assemble into four stacked heptameric rings, resulting in a barrel-shaped structure. The two inner rings, each composed of seven catalytic beta subunits, are sandwiched by two outer rings, each composed of seven alpha subunits. The catalytic chamber with the active sites is on the inside of the barrel. Has a gated structure, the ends of the cylinder being occluded by the N-termini of the alpha-subunits. Is capped at one or both ends by the proteasome regulatory ATPase, PAN.

It is found in the cytoplasm. The enzyme catalyses Cleavage of peptide bonds with very broad specificity.. The formation of the proteasomal ATPase PAN-20S proteasome complex, via the docking of the C-termini of PAN into the intersubunit pockets in the alpha-rings, triggers opening of the gate for substrate entry. Interconversion between the open-gate and close-gate conformations leads to a dynamic regulation of the 20S proteasome proteolysis activity. Functionally, component of the proteasome core, a large protease complex with broad specificity involved in protein degradation. The chain is Proteasome subunit beta 2 from Staphylothermus marinus (strain ATCC 43588 / DSM 3639 / JCM 9404 / F1).